The following is a 380-amino-acid chain: MANIRKTHPLLKIINGAVIDLPTPSNISAWWNFGSLLGLCLITQVLTGLFLAMHYTADITLAFSSVAHICRDVNYGWLLRNIHANGASFFFICIYLHIARGLYYGSYLYKETWNIGVLLLLLVMMTAFVGYVLPWGQMSFWGATVITNLLSAFPYIGDTLVQWIWGGFSVDNATLTRFFTFHFLLPFIIMGATMLHLLFLHETGSNNPTGLNSDADKVTFHPYFSYKDLLGFTILLAILSALALLNPNLLGDPENFTPANPLVTPPHIKPEWYFLFAYAILRSIPNKLGGVLALLLSILILVVVPVLHTSKQRSNTFRPPSQTLFWILVANMLVLTWIGGQPVEHPFIIIGQIASVLYFMLFLILIPLTGWLENKILDWA.

Transmembrane regions (helical) follow at residues 33–53, 77–98, 113–133, and 178–198; these read FGSL…FLAM, WLLR…YLHI, WNIG…GYVL, and FFTF…LHLL. Residues histidine 83 and histidine 97 each coordinate heme b. Heme b is bound by residues histidine 182 and histidine 196. Histidine 201 contacts a ubiquinone. The next 4 membrane-spanning stretches (helical) occupy residues 226 to 246, 288 to 308, 320 to 340, and 347 to 367; these read YKDL…ALLN, LGGV…PVLH, PSQT…WIGG, and FIII…ILIP.

This sequence belongs to the cytochrome b family. In terms of assembly, the cytochrome bc1 complex contains 3 respiratory subunits (MT-CYB, CYC1 and UQCRFS1), 2 core proteins (UQCRC1 and UQCRC2) and probably 6 low-molecular weight proteins. The cofactor is heme b.

Its subcellular location is the mitochondrion inner membrane. In terms of biological role, component of the ubiquinol-cytochrome c reductase complex (complex III or cytochrome b-c1 complex) that is part of the mitochondrial respiratory chain. The b-c1 complex mediates electron transfer from ubiquinol to cytochrome c. Contributes to the generation of a proton gradient across the mitochondrial membrane that is then used for ATP synthesis. The chain is Cytochrome b (mt-cyb) from Atractosteus spatula (Alligator gar).